Here is a 374-residue protein sequence, read N- to C-terminus: Putative F-box protein At3g17480 (374 aa).

The 47-residue stretch at 6–52 (SSPMSVLTEDLVEDILSRVPATSLVRLRSTCKQWNAILNDRRFIKKH) folds into the F-box domain.

The polypeptide is Putative F-box protein At3g17480 (Arabidopsis thaliana (Mouse-ear cress)).